The chain runs to 134 residues: U35-theraphotoxin-Cg1a (134 aa).

The first 18 residues, 1 to 18 (MLVTLLETFSVVFQVANG), serve as a signal peptide directing secretion. The propeptide occupies 19-56 (DGNCVPRFQDDVEFCDNYILEAVTEASKMIAPRAREQK).

As to expression, expressed by the venom gland.

The protein localises to the secreted. In terms of biological role, probable secreted venom toxin. The polypeptide is U35-theraphotoxin-Cg1a (Chilobrachys guangxiensis (Chinese earth tiger tarantula)).